Reading from the N-terminus, the 222-residue chain is tRNA (guanine-N(1)-)-methyltransferase (222 aa).

S-adenosyl-L-methionine-binding positions include Gly-112 and 132–137 (IGDYVL).

The protein belongs to the RNA methyltransferase TrmD family. Homodimer.

The protein localises to the cytoplasm. It catalyses the reaction guanosine(37) in tRNA + S-adenosyl-L-methionine = N(1)-methylguanosine(37) in tRNA + S-adenosyl-L-homocysteine + H(+). Its function is as follows. Specifically methylates guanosine-37 in various tRNAs. This Azobacteroides pseudotrichonymphae genomovar. CFP2 protein is tRNA (guanine-N(1)-)-methyltransferase.